Reading from the N-terminus, the 306-residue chain is Recombination-associated protein RdgC (306 aa).

This sequence belongs to the RdgC family.

Its subcellular location is the cytoplasm. It is found in the nucleoid. Its function is as follows. May be involved in recombination. This Pseudomonas fluorescens (strain SBW25) protein is Recombination-associated protein RdgC.